An 824-amino-acid polypeptide reads, in one-letter code: Probable ion channel POLLUX (824 aa).

Positions 45–54 (DGDDSSNLPT) are enriched in low complexity. The tract at residues 45 to 70 (DGDDSSNLPTVPNPEEKPVPVPSQSP) is disordered. 4 helical membrane-spanning segments follow: residues 81-101 (FSLTHCLKFICSCSFTYVMFL), 135-155 (AVVFFSVIITFVLPFLLYMYL), 198-218 (LALLLATVVLIVYGGLALYAV), and 250-270 (IVSVAISAGGMLIFATMLGLI). 2 consecutive RCK N-terminal domains span residues 291 to 432 (SNHI…ETVV) and 550 to 699 (PEKI…DKSI). The stretch at 325-346 (LAERDKEEMETDIAKFEFDLMG) forms a coiled coil.

It belongs to the castor/pollux (TC 1.A.1.23) family.

It is found in the nucleus membrane. The sequence is that of Probable ion channel POLLUX from Arabidopsis thaliana (Mouse-ear cress).